The primary structure comprises 474 residues: tRNA-2-methylthio-N(6)-dimethylallyladenosine synthase (474 aa).

In terms of domain architecture, MTTase N-terminal spans 3–120 (KKLHIKTWGC…LPEMIEQIQR (118 aa)). [4Fe-4S] cluster is bound by residues C12, C49, C83, C157, C161, and C164. Residues 143–375 (RADGPTAFVS…QDRITQQAMR (233 aa)) form the Radical SAM core domain. Residues 378 to 441 (RQMLGTVQRI…TNSLRGEFVR (64 aa)) form the TRAM domain.

This sequence belongs to the methylthiotransferase family. MiaB subfamily. Monomer. Requires [4Fe-4S] cluster as cofactor.

Its subcellular location is the cytoplasm. The catalysed reaction is N(6)-dimethylallyladenosine(37) in tRNA + (sulfur carrier)-SH + AH2 + 2 S-adenosyl-L-methionine = 2-methylsulfanyl-N(6)-dimethylallyladenosine(37) in tRNA + (sulfur carrier)-H + 5'-deoxyadenosine + L-methionine + A + S-adenosyl-L-homocysteine + 2 H(+). Catalyzes the methylthiolation of N6-(dimethylallyl)adenosine (i(6)A), leading to the formation of 2-methylthio-N6-(dimethylallyl)adenosine (ms(2)i(6)A) at position 37 in tRNAs that read codons beginning with uridine. The sequence is that of tRNA-2-methylthio-N(6)-dimethylallyladenosine synthase from Shewanella frigidimarina (strain NCIMB 400).